The following is a 627-amino-acid chain: MTAEQALPLGNGKAAEEARGSEALGGGGGGAAGTREARDKAVHERGHWNNKVEFVLSVAGEIIGLGNVWRFPYLCYKNGGGAFLIPYVVFFICCGIPVFFLETALGQFTSEGGITCWRRVCPLFEGIGYATQVIEAHLNVYYIIILAWAIFYLSNCFTTELPWATCGHEWNTEKCVEFQKLNFSNYSHVSLQNATSPVMEFWERRVLAISDGIEHIGNLRWELALCLLAAWTICYFCIWKGTKSTGKVVYVTATFPYIMLLILLIRGVTLPGASEGIKFYLYPDLSRLSDPQVWVDAGTQIFFSYAICLGCLTALGSYNNYNNNCYRDCIMLCCLNSGTSFVAGFAIFSVLGFMAYEQGVPIAEVAESGPGLAFIAYPKAVTMMPLSPLWATLFFMMLIFLGLDSQFVCVESLVTAVVDMYPKVFRRGYRRELLILALSIVSYFLGLVMLTEGGMYIFQLFDSYAASGMCLLFVAIFECVCIGWVYGSNRFYDNIEDMIGYRPLSLIKWCWKVVTPGICAGIFIFFLVKYKPLKYNNVYTYPAWGYGIGWLMALSSMLCIPLWIFIKLWKTEGTLPEKLQKLTVPSADLKMRGKLGASPRMVTVNDCEAKVKGDGTISAITEKETHF.

A disordered region spans residues 1-36 (MTAEQALPLGNGKAAEEARGSEALGGGGGGAAGTRE). The Cytoplasmic portion of the chain corresponds to 1 to 53 (MTAEQALPLGNGKAAEEARGSEALGGGGGGAAGTREARDKAVHERGHWNNKVE). Ser21 carries the phosphoserine modification. Residues 23 to 32 (ALGGGGGGAA) show a composition bias toward gly residues. The next 3 membrane-spanning stretches (helical) occupy residues 54–74 (FVLS…FPYL), 82–101 (AFLI…VFFL), and 126–146 (GIGY…IIIL). At 147–220 (AWAIFYLSNC…DGIEHIGNLR (74 aa)) the chain is on the extracellular side. 3 N-linked (GlcNAc...) asparagine glycosylation sites follow: Asn182, Asn185, and Asn193. 9 helical membrane passes run 221 to 239 (WELA…FCIW), 248 to 265 (VVYV…ILLI), 301 to 318 (IFFS…LGSY), 330 to 351 (IMLC…FSVL), 384 to 403 (MPLS…FLGL), 433 to 451 (LLIL…VMLT), 468 to 488 (GMCL…VYGS), 509 to 528 (WCWK…FFLV), and 548 to 566 (IGWL…WIFI). Residues 567–627 (KLWKTEGTLP…SAITEKETHF (61 aa)) are Cytoplasmic-facing.

Belongs to the sodium:neurotransmitter symporter (SNF) (TC 2.A.22) family. SLC6A11 subfamily. Brain and retina. Expressed predominantly within neurons. Expressed in the hippocampus (at protein level).

The protein localises to the cell membrane. The enzyme catalyses 4-aminobutanoate(out) + chloride(out) + 2 Na(+)(out) = 4-aminobutanoate(in) + chloride(in) + 2 Na(+)(in). The catalysed reaction is taurine(out) + chloride(out) + 2 Na(+)(out) = taurine(in) + chloride(in) + 2 Na(+)(in). It catalyses the reaction beta-alanine(out) + chloride(out) + 2 Na(+)(out) = beta-alanine(in) + chloride(in) + 2 Na(+)(in). It carries out the reaction hypotaurine(out) + chloride(out) + 2 Na(+)(out) = hypotaurine(in) + chloride(in) + 2 Na(+)(in). With respect to regulation, GABA transport is inhibited by beta-alanine. Functionally, mediates sodium- and chloride-dependent transport of gamma-aminobutyric acid (GABA). Can also mediate transport of beta-alanine and to a lower extent that of taurine and hypotaurine. In Rattus norvegicus (Rat), this protein is Sodium- and chloride-dependent GABA transporter 3 (Slc6a11).